The sequence spans 305 residues: Tyrosine recombinase XerC (305 aa).

Residues 4–95 enclose the Core-binding (CB) domain; that stretch reads TSIQALINKW…AVKNFYRFLE (92 aa). The Tyr recombinase domain maps to 116-298; it reads LLPKALSEDD…SIKHLEAVYT (183 aa). Active-site residues include Arg159, Lys182, His250, Arg253, and His276. Residue Tyr285 is the O-(3'-phospho-DNA)-tyrosine intermediate of the active site.

It belongs to the 'phage' integrase family. XerC subfamily. As to quaternary structure, forms a cyclic heterotetrameric complex composed of two molecules of XerC and two molecules of XerD.

The protein resides in the cytoplasm. Functionally, site-specific tyrosine recombinase, which acts by catalyzing the cutting and rejoining of the recombining DNA molecules. The XerC-XerD complex is essential to convert dimers of the bacterial chromosome into monomers to permit their segregation at cell division. It also contributes to the segregational stability of plasmids. The protein is Tyrosine recombinase XerC of Rickettsia africae (strain ESF-5).